The following is a 605-amino-acid chain: Pescadillo homolog (605 aa).

One can recognise a BRCT domain in the interval 346 to 440 (PVATLFSEFV…ELVPANLYLP (95 aa)). Positions 449-553 (SPWGDSTGYD…RKATEEEEEK (105 aa)) are disordered. Residues 461–508 (AENDEDVEGSDAEEIDESADEDAESEEVEEDDTAAVALNEDDEDDEDE) are compositionally biased toward acidic residues. Basic and acidic residues predominate over residues 526–537 (EAKDVIDSESSD). Residues 533–605 (SESSDKKKKK…KAKLAKLDKK (73 aa)) adopt a coiled-coil conformation.

This sequence belongs to the pescadillo family. In terms of assembly, component of the NOP7 complex, composed of ERB1, NOP7 and YTM1. The complex is held together by ERB1, which interacts with NOP7 via its N-terminal domain and with YTM1 via a high-affinity interaction between the seven-bladed beta-propeller domains of the 2 proteins. The NOP7 complex associates with the 66S pre-ribosome.

The protein localises to the nucleus. The protein resides in the nucleolus. It localises to the nucleoplasm. Component of the NOP7 complex, which is required for maturation of the 25S and 5.8S ribosomal RNAs and formation of the 60S ribosome. This Kluyveromyces lactis (strain ATCC 8585 / CBS 2359 / DSM 70799 / NBRC 1267 / NRRL Y-1140 / WM37) (Yeast) protein is Pescadillo homolog.